Reading from the N-terminus, the 289-residue chain is ATP synthase gamma chain (289 aa).

It belongs to the ATPase gamma chain family. In terms of assembly, F-type ATPases have 2 components, CF(1) - the catalytic core - and CF(0) - the membrane proton channel. CF(1) has five subunits: alpha(3), beta(3), gamma(1), delta(1), epsilon(1). CF(0) has three main subunits: a, b and c.

The protein localises to the cell membrane. Its function is as follows. Produces ATP from ADP in the presence of a proton gradient across the membrane. The gamma chain is believed to be important in regulating ATPase activity and the flow of protons through the CF(0) complex. This Lactococcus lactis subsp. cremoris (strain MG1363) protein is ATP synthase gamma chain.